Here is a 1685-residue protein sequence, read N- to C-terminus: Myomesin-1 (1685 aa).

The disordered stretch occupies residues 33-80 (KKRSAVYTQGSTAYSSRSSAAHRRESEAFRRASASSSQQQASQHALSS). Low complexity-rich tracts occupy residues 41–51 (QGSTAYSSRSS) and 63–80 (RASA…ALSS). At Ser113 the chain carries Phosphoserine. The interval 177-244 (GITTSKQSTA…TSEKKSRKVV (68 aa)) is disordered. Residues 179–220 (TTSKQSTASKQTTASKQSTASKQSTASKQSTASRQSTASRQS) are compositionally biased toward low complexity. 6 consecutive repeat copies span residues 182 to 187 (KQSTAS), 188 to 193 (KQTTAS), 194 to 199 (KQSTAS), 200 to 205 (KQSTAS), 206 to 211 (KQSTAS), and 212 to 217 (RQSTAS). Residues 182–217 (KQSTASKQTTASKQSTASKQSTASKQSTASRQSTAS) form a 6 X 6 AA tandem repeats region. Positions 221-233 (VVSKQATSALQQE) are enriched in polar residues. 2 Ig-like C2-type domains span residues 277–368 (PEFI…ASVV) and 396–498 (PYGY…AYVF). 3 consecutive Fibronectin type-III domains span residues 512–607 (APLD…ALDP), 640–734 (PPTD…VVGD), and 741–834 (APGK…VKAA). The interval 840–938 (SPDVCPALSD…TDRAPPSPPC (99 aa)) is disordered. Positions 874–888 (LLGSKPNKPSLPSSS) are enriched in low complexity. Ser883 and Ser887 each carry phosphoserine. Residues 889–902 (QNLGQTEVSKVSET) show a composition bias toward polar residues. Over residues 920-931 (SKSDPLKKKTDR) the composition is skewed to basic and acidic residues. Fibronectin type-III domains follow at residues 933–1034 (PPSP…CEEW) and 1041–1140 (PPHS…TRPG). Phosphoserine is present on Ser1054. 3 consecutive Ig-like C2-type domains span residues 1132–1230 (PVVA…EELK), 1358–1444 (PHFV…LKLV), and 1573–1662 (RVLG…FTVS). The cysteines at positions 1160 and 1210 are disulfide-linked.

As to quaternary structure, homodimer. Interacts with TTN/titin. Interacts with PNKD.

Its subcellular location is the cytoplasm. The protein resides in the myofibril. The protein localises to the sarcomere. It localises to the m line. Major component of the vertebrate myofibrillar M band. Binds myosin, titin, and light meromyosin. This binding is dose dependent. In Homo sapiens (Human), this protein is Myomesin-1 (MYOM1).